The primary structure comprises 37 residues: Large ribosomal subunit protein bL36 (37 aa).

This sequence belongs to the bacterial ribosomal protein bL36 family.

In Dehalococcoides mccartyi (strain ATCC BAA-2266 / KCTC 15142 / 195) (Dehalococcoides ethenogenes (strain 195)), this protein is Large ribosomal subunit protein bL36.